A 425-amino-acid chain; its full sequence is Trigger factor (425 aa).

In terms of domain architecture, PPIase FKBP-type spans 158–231 (GDLVRVNMEV…VEEVYKRTLP (74 aa)).

This sequence belongs to the FKBP-type PPIase family. Tig subfamily.

The protein resides in the cytoplasm. The enzyme catalyses [protein]-peptidylproline (omega=180) = [protein]-peptidylproline (omega=0). Functionally, involved in protein export. Acts as a chaperone by maintaining the newly synthesized protein in an open conformation. Functions as a peptidyl-prolyl cis-trans isomerase. The polypeptide is Trigger factor (Thermotoga petrophila (strain ATCC BAA-488 / DSM 13995 / JCM 10881 / RKU-1)).